Reading from the N-terminus, the 186-residue chain is Peptide deformylase (186 aa).

2 residues coordinate Fe cation: Cys113 and His156. Glu157 is a catalytic residue. A Fe cation-binding site is contributed by His160.

Belongs to the polypeptide deformylase family. Fe(2+) is required as a cofactor.

The enzyme catalyses N-terminal N-formyl-L-methionyl-[peptide] + H2O = N-terminal L-methionyl-[peptide] + formate. Functionally, removes the formyl group from the N-terminal Met of newly synthesized proteins. Requires at least a dipeptide for an efficient rate of reaction. N-terminal L-methionine is a prerequisite for activity but the enzyme has broad specificity at other positions. The protein is Peptide deformylase of Levilactobacillus brevis (strain ATCC 367 / BCRC 12310 / CIP 105137 / JCM 1170 / LMG 11437 / NCIMB 947 / NCTC 947) (Lactobacillus brevis).